The chain runs to 917 residues: Probable dipeptidyl-aminopeptidase B (917 aa).

Basic and acidic residues predominate over residues 1 to 16; that stretch reads MATEKGHGRDDEERVP. The tract at residues 1 to 21 is disordered; that stretch reads MATEKGHGRDDEERVPLTRGS. Over 1–99 the chain is Cytoplasmic; it reads MATEKGHGRD…KPMHKSVKIA (99 aa). Residues 100-120 form a helical; Signal-anchor for type II membrane protein membrane-spanning segment; that stretch reads LWTLLFLSLGGWSLAFVLFIF. Residues 121–917 lie on the Vacuolar side of the membrane; sequence RSHDTYETPI…RAATWAGLSI (797 aa). 3 N-linked (GlcNAc...) asparagine glycosylation sites follow: Asn135, Asn351, and Asn574. Ser756 (charge relay system) is an active-site residue. An N-linked (GlcNAc...) asparagine glycan is attached at Asn815. Active-site charge relay system residues include Asp833 and His866. A glycan (N-linked (GlcNAc...) asparagine) is linked at Asn902.

Belongs to the peptidase S9B family.

The protein localises to the vacuole membrane. The catalysed reaction is Release of an N-terminal dipeptide, Xaa-Yaa-|-Zaa-, from a polypeptide, preferentially when Yaa is Pro, provided Zaa is neither Pro nor hydroxyproline.. Functionally, type IV dipeptidyl-peptidase which removes N-terminal dipeptides sequentially from polypeptides having unsubstituted N-termini provided that the penultimate residue is proline. In Ajellomyces capsulatus (strain H88) (Darling's disease fungus), this protein is Probable dipeptidyl-aminopeptidase B (DAPB).